The following is a 549-amino-acid chain: Glutamyl-tRNA(Gln) amidotransferase subunit B, chloroplastic/mitochondrial (549 aa).

This sequence belongs to the GatB/GatE family. GatB subfamily. Subunit of the heterotrimeric GatCAB amidotransferase (AdT) complex, composed of A, B and C subunits.

Its subcellular location is the mitochondrion. The protein localises to the plastid. It is found in the chloroplast. It catalyses the reaction L-glutamyl-tRNA(Gln) + L-glutamine + ATP + H2O = L-glutaminyl-tRNA(Gln) + L-glutamate + ADP + phosphate + H(+). Allows the formation of correctly charged Gln-tRNA(Gln) through the transamidation of misacylated Glu-tRNA(Gln) in chloroplasts and mitochondria. The reaction takes place in the presence of glutamine and ATP through an activated gamma-phospho-Glu-tRNA(Gln). The chain is Glutamyl-tRNA(Gln) amidotransferase subunit B, chloroplastic/mitochondrial from Ricinus communis (Castor bean).